The sequence spans 159 residues: Ribosome maturation factor RimP (159 aa).

This sequence belongs to the RimP family.

The protein localises to the cytoplasm. Its function is as follows. Required for maturation of 30S ribosomal subunits. The chain is Ribosome maturation factor RimP from Geobacter metallireducens (strain ATCC 53774 / DSM 7210 / GS-15).